Reading from the N-terminus, the 419-residue chain is Tol-Pal system protein TolB (419 aa).

An N-terminal signal peptide occupies residues 1 to 19; the sequence is MCNRIISLFLLLFTGQVIA.

This sequence belongs to the TolB family. In terms of assembly, the Tol-Pal system is composed of five core proteins: the inner membrane proteins TolA, TolQ and TolR, the periplasmic protein TolB and the outer membrane protein Pal. They form a network linking the inner and outer membranes and the peptidoglycan layer.

The protein resides in the periplasm. Its function is as follows. Part of the Tol-Pal system, which plays a role in outer membrane invagination during cell division and is important for maintaining outer membrane integrity. This Legionella pneumophila (strain Paris) protein is Tol-Pal system protein TolB.